Here is an 844-residue protein sequence, read N- to C-terminus: Protein translocase subunit SecA (844 aa).

ATP contacts are provided by residues glutamine 89, 107–111 (GEGKT), and aspartate 497. Zn(2+) is bound by residues cysteine 829, cysteine 831, cysteine 840, and histidine 841.

Belongs to the SecA family. In terms of assembly, monomer and homodimer. Part of the essential Sec protein translocation apparatus which comprises SecA, SecYEG and auxiliary proteins SecDF. Other proteins may also be involved. It depends on Zn(2+) as a cofactor.

The protein resides in the cell membrane. Its subcellular location is the cytoplasm. It catalyses the reaction ATP + H2O + cellular proteinSide 1 = ADP + phosphate + cellular proteinSide 2.. In terms of biological role, part of the Sec protein translocase complex. Interacts with the SecYEG preprotein conducting channel. Has a central role in coupling the hydrolysis of ATP to the transfer of proteins into and across the cell membrane, serving as an ATP-driven molecular motor driving the stepwise translocation of polypeptide chains across the membrane. This is Protein translocase subunit SecA from Streptococcus suis (strain 98HAH33).